A 392-amino-acid polypeptide reads, in one-letter code: 3-ketoacyl-CoA thiolase (392 aa).

Cys-95 acts as the Acyl-thioester intermediate in catalysis. Catalysis depends on proton acceptor residues His-347 and Cys-377.

It belongs to the thiolase-like superfamily. Thiolase family. Heterotetramer of two alpha chains (FadB) and two beta chains (FadA).

Its subcellular location is the cytoplasm. It carries out the reaction an acyl-CoA + acetyl-CoA = a 3-oxoacyl-CoA + CoA. The protein operates within lipid metabolism; fatty acid beta-oxidation. Functionally, catalyzes the final step of fatty acid oxidation in which acetyl-CoA is released and the CoA ester of a fatty acid two carbons shorter is formed. This is 3-ketoacyl-CoA thiolase from Chromohalobacter salexigens (strain ATCC BAA-138 / DSM 3043 / CIP 106854 / NCIMB 13768 / 1H11).